A 258-amino-acid polypeptide reads, in one-letter code: UPF0246 protein YaaA (258 aa).

The protein belongs to the UPF0246 family.

The chain is UPF0246 protein YaaA from Escherichia coli (strain 55989 / EAEC).